We begin with the raw amino-acid sequence, 1159 residues long: ATP-dependent helicase/deoxyribonuclease subunit B (1159 aa).

It belongs to the helicase family. AddB/RexB type 2 subfamily. Heterodimer of AddA and RexB. Mg(2+) serves as cofactor.

The heterodimer acts as both an ATP-dependent DNA helicase and an ATP-dependent, dual-direction single-stranded exonuclease. Recognizes the chi site generating a DNA molecule suitable for the initiation of homologous recombination. This subunit has 5' -&gt; 3' nuclease activity but not helicase activity. This chain is ATP-dependent helicase/deoxyribonuclease subunit B, found in Leuconostoc mesenteroides subsp. mesenteroides (strain ATCC 8293 / DSM 20343 / BCRC 11652 / CCM 1803 / JCM 6124 / NCDO 523 / NBRC 100496 / NCIMB 8023 / NCTC 12954 / NRRL B-1118 / 37Y).